Here is a 150-residue protein sequence, read N- to C-terminus: UPF0756 membrane protein Asuc_1151 (150 aa).

A run of 4 helical transmembrane segments spans residues 1-21 (MSLH…LGVL), 52-72 (YGLN…IVAG), 82-102 (LLHW…WLAG), and 123-143 (ILGV…AGIL).

Belongs to the UPF0756 family.

Its subcellular location is the cell membrane. This is UPF0756 membrane protein Asuc_1151 from Actinobacillus succinogenes (strain ATCC 55618 / DSM 22257 / CCUG 43843 / 130Z).